The primary structure comprises 542 residues: Chaperonin GroEL (542 aa).

ATP is bound by residues 29 to 32 (TLGP), 86 to 90 (DGTTT), Gly413, 476 to 478 (NAA), and Asp492.

This sequence belongs to the chaperonin (HSP60) family. As to quaternary structure, forms a cylinder of 14 subunits composed of two heptameric rings stacked back-to-back. Interacts with the co-chaperonin GroES.

Its subcellular location is the cytoplasm. It carries out the reaction ATP + H2O + a folded polypeptide = ADP + phosphate + an unfolded polypeptide.. Functionally, together with its co-chaperonin GroES, plays an essential role in assisting protein folding. The GroEL-GroES system forms a nano-cage that allows encapsulation of the non-native substrate proteins and provides a physical environment optimized to promote and accelerate protein folding. The polypeptide is Chaperonin GroEL (Lactococcus lactis subsp. cremoris (strain MG1363)).